The primary structure comprises 479 residues: MNRNPDQNTLPNITLKIIETYLGRVPSVNEYHMLKLQARNIQKITVFNKDIFVSLVKKNKKRFFSDVNTSASEIKDRILSYFSKQTQTYNIGKLFTIIELQSVLVTTYTDILGVLTIKAPNVISSKISYNVTSMEELARDMLNSMNVAVIDKAKVMGRHNVSSLVKNVNKLMEEYLRRHNKSCICYGSYSLYLINPNIRYGDIDILQTNSRTFLIDLAFLIKFITGNNIILSKIPYLRNYMVIKDENDNHIIDSFNIRQDTMNVVPKIFIDNIYIVDPTFQLLNMIKMFSQIDRLEDLSKDPEKFNARMATMLEYVRYTHGIVFDGKRNNMPMKCIIDENNRIVTVTTKDYFSFKKCLVYLDENVLSSDILDLNADTSCDFESVTNSVYLIHDNIMYTYFSNTILLSDKGKVHEISARGLCAHILLYQMLTSGEYKQCLSDLLNSMMNRDKIPIYSHTERDKKPGRHGFINIEKDIIVF.

Residues D202 and D204 contribute to the active site. The Ca(2+) site is built by D202, D204, and D253.

It belongs to the poxviridae poly(A) polymerase catalytic subunit family. As to quaternary structure, heterodimer of a large (catalytic) subunit and a small (regulatory) subunit.

It carries out the reaction RNA(n) + ATP = RNA(n)-3'-adenine ribonucleotide + diphosphate. Functionally, polymerase that creates the 3'-poly(A) tail of mRNA's. The sequence is that of Poly(A) polymerase catalytic subunit (OPG063) from Bos taurus (Bovine).